The chain runs to 1079 residues: Capping protein inhibiting regulator of actin dynamics (1079 aa).

Residues 1–11 (MSQENVSDKVR) are compositionally biased toward basic and acidic residues. Disordered stretches follow at residues 1-293 (MSQE…EEER), 308-327 (ERKR…AEKR), 341-383 (EHRI…EWKR), 420-453 (PVTP…PTLS), 493-522 (EGKK…VFES), 606-639 (IFGQ…VQSR), and 658-1054 (PSFL…TTQV). Over residues 36 to 45 (DEGSSDEEEV) the composition is skewed to acidic residues. Residues 64–76 (SAKEKSVSHDTVQ) show a composition bias toward basic and acidic residues. The span at 115 to 134 (AKHKLSVKPKNQRVSRKHRR) shows a compositional bias: basic residues. Residues 140 to 158 (HEDDFSEIQEEFEKDEEVF) are compositionally biased toward acidic residues. Residues 159–293 (DSSREDYGII…EERKRAEEER (135 aa)) show a composition bias toward basic and acidic residues. Residues 420–434 (PVTPATGQQGETTAE) show a composition bias toward polar residues. The segment covering 670-682 (PKSQRSESGSPIQ) has biased composition (polar residues). The span at 684 to 695 (ESEDSDTKDEDG) shows a compositional bias: acidic residues. Residues 756–781 (DNSTLSEKSSPISPQQENIEFQTTVA) are compositionally biased toward polar residues. 2 stretches are compositionally biased toward basic and acidic residues: residues 896–930 (WREK…DKET) and 944–983 (GFRE…EDKG). The segment covering 984–993 (NGSSSIISKH) has biased composition (polar residues). The span at 994–1016 (QTADENKRPDTLLARFERRDNLK) shows a compositional bias: basic and acidic residues. Polar residues predominate over residues 1020–1033 (TLPSSVTVEITDST).

As to quaternary structure, directly interacts with actin-capping proteins; this interaction decreases the binding of capping proteins to actin.

The protein localises to the cytoplasm. It is found in the cytosol. In terms of biological role, involved in epithelial cell integrity by acting on the maintenance of the actin cytoskeleton. Positively regulates the actin polymerization, by inhibiting the interaction of actin-capping proteins with actin. This chain is Capping protein inhibiting regulator of actin dynamics (crad), found in Danio rerio (Zebrafish).